Here is a 562-residue protein sequence, read N- to C-terminus: Glutamine--tRNA ligase (562 aa).

A 'HIGH' region motif is present at residues 35–45 (PEPNGYLHIGH). Residues 36-38 (EPN) and 42-48 (HIGHAKS) each bind ATP. The L-glutamine site is built by Asp68 and Tyr213. Residues Thr232 and 264–265 (RL) each bind ATP. Residues 271–275 (ITSKR) carry the 'KMSKS' region motif.

Belongs to the class-I aminoacyl-tRNA synthetase family. As to quaternary structure, monomer.

The protein localises to the cytoplasm. The catalysed reaction is tRNA(Gln) + L-glutamine + ATP = L-glutaminyl-tRNA(Gln) + AMP + diphosphate. The sequence is that of Glutamine--tRNA ligase from Neisseria gonorrhoeae (strain ATCC 700825 / FA 1090).